A 276-amino-acid chain; its full sequence is MPDYAIGDVQGCYDPLQRLLELIDFNEKEDCLWFVGDLVNRGPDSLAVLRFIYSLPVKPKITLGNHDLHLLGLLFGGQPWKGHDDTLEEVMLADDGEELGHWLRKQSLLCRSSELNIVMCHAGIAPLWDLSKAVGLANELEAVLSGDSYHEFFAQMYGNKPDIWSDDLVGLDRLRVITNYFTRMRYCDAHGRLDLGYKGTLSKAPNHLYPWFEVPCRKEIEMDIVFGHWAALMGRSSHPRIHAIDTGCLWGGQLTALRLQDRQRFSVPGYGVSRFE.

It belongs to the Ap4A hydrolase family.

It carries out the reaction P(1),P(4)-bis(5'-adenosyl) tetraphosphate + H2O = 2 ADP + 2 H(+). Its function is as follows. Hydrolyzes diadenosine 5',5'''-P1,P4-tetraphosphate to yield ADP. This chain is Bis(5'-nucleosyl)-tetraphosphatase, symmetrical, found in Legionella pneumophila (strain Corby).